We begin with the raw amino-acid sequence, 164 residues long: FMN reductase (NADH) RutF (164 aa).

Belongs to the non-flavoprotein flavin reductase family. RutF subfamily.

It carries out the reaction FMNH2 + NAD(+) = FMN + NADH + 2 H(+). Its function is as follows. Catalyzes the reduction of FMN to FMNH2 which is used to reduce pyrimidine by RutA via the Rut pathway. This Shigella flexneri serotype X (strain 2002017) protein is FMN reductase (NADH) RutF.